The following is a 196-amino-acid chain: MNLKRISEAKLPTPWGDFLMIGFKELDKEQDHLALVLGDISTDAPVLSRIHSECLTGDALFSLRCDCGFQLKAAFKQICEEKRGLLIYHRQEGRNIGLLNKIRAYALQDQGADTVEANHQLGFATDERDFTVCANIYKILDVKAIRLLTNNPEKIKILKKEGINVVQRVSLIVESNPNNQDYLSTKKNKMGHFFKK.

49–53 (RIHSE) contacts GTP. Residues cysteine 54, cysteine 65, and cysteine 67 each contribute to the Zn(2+) site. Residues glutamine 70, 92–94 (EGR), and threonine 114 contribute to the GTP site. Catalysis depends on aspartate 126, which acts as the Proton acceptor. The active-site Nucleophile is arginine 128. 2 residues coordinate GTP: threonine 149 and lysine 154.

The protein belongs to the GTP cyclohydrolase II family. In terms of assembly, homodimer. Requires Zn(2+) as cofactor.

It catalyses the reaction GTP + 4 H2O = 2,5-diamino-6-hydroxy-4-(5-phosphoribosylamino)-pyrimidine + formate + 2 phosphate + 3 H(+). It functions in the pathway cofactor biosynthesis; riboflavin biosynthesis; 5-amino-6-(D-ribitylamino)uracil from GTP: step 1/4. Its function is as follows. Catalyzes the conversion of GTP to 2,5-diamino-6-ribosylamino-4(3H)-pyrimidinone 5'-phosphate (DARP), formate and pyrophosphate. The sequence is that of GTP cyclohydrolase-2 from Hamiltonella defensa subsp. Acyrthosiphon pisum (strain 5AT).